The primary structure comprises 409 residues: DNA replication and repair protein RecF (409 aa).

Position 30–37 (30–37) interacts with ATP; that stretch reads GSNGHGKT.

This sequence belongs to the RecF family.

It localises to the cytoplasm. The RecF protein is involved in DNA metabolism; it is required for DNA replication and normal SOS inducibility. RecF binds preferentially to single-stranded, linear DNA. It also seems to bind ATP. The chain is DNA replication and repair protein RecF from Rhodococcus erythropolis (strain PR4 / NBRC 100887).